The primary structure comprises 117 residues: Swarming motility protein SwrAA (117 aa).

The protein resides in the cytoplasm. Functionally, required for swarm cell differentiation. Plays a crucial role in regulating the degree of cell flagellation. In Bacillus subtilis (strain 168), this protein is Swarming motility protein SwrAA (swrAA).